Here is a 91-residue protein sequence, read N- to C-terminus: MARSVWKGPFVELSLLRKAEDAQEASSNKPIKTWSRRSTILPQFVGLTFNVYNGHKFIPVSVSEEMVGHKLGEFAPTRTFPGHAADKKGKR.

This sequence belongs to the universal ribosomal protein uS19 family.

Functionally, protein S19 forms a complex with S13 that binds strongly to the 16S ribosomal RNA. The polypeptide is Small ribosomal subunit protein uS19 (Erythrobacter litoralis (strain HTCC2594)).